Consider the following 205-residue polypeptide: Small ribosomal subunit protein uS4 (205 aa).

Residues 1 to 16 (MSKRESSKYKIDRRMG) show a composition bias toward basic and acidic residues. Positions 1–46 (MSKRESSKYKIDRRMGENIWGRPKSPVNRREYGPGQHGQRRKGKLS) are disordered. An S4 RNA-binding domain is found at 94–157 (SRLDAIVYRA…KQLVIVLESV (64 aa)).

This sequence belongs to the universal ribosomal protein uS4 family. Part of the 30S ribosomal subunit. Contacts protein S5. The interaction surface between S4 and S5 is involved in control of translational fidelity.

In terms of biological role, one of the primary rRNA binding proteins, it binds directly to 16S rRNA where it nucleates assembly of the body of the 30S subunit. Functionally, with S5 and S12 plays an important role in translational accuracy. This chain is Small ribosomal subunit protein uS4, found in Rhizobium rhizogenes (strain K84 / ATCC BAA-868) (Agrobacterium radiobacter).